A 334-amino-acid polypeptide reads, in one-letter code: Ethanol acetyltransferase 1 (334 aa).

The transit peptide at 1 to 16 directs the protein to the mitochondrion; it reads MFASNVVVLNKRSIRF. Active-site charge relay system residues include S124, D148, and H296.

This sequence belongs to the AB hydrolase superfamily.

It is found in the mitochondrion. It carries out the reaction ethanol + acetyl-CoA = ethyl acetate + CoA. It catalyses the reaction acetyl-CoA + H2O = acetate + CoA + H(+). The catalysed reaction is ethyl acetate + H2O = ethanol + acetate + H(+). In terms of biological role, alcohol acetyltransferase that catalyzes the synthesis of ethyl acetate from ethanol and acetyl-CoA. Can also function as a thioesterase by hydrolyzing acetyl-CoA in the absence of ethanol, as well as esterase hydrolyzing ethyl acetate. This Hanseniaspora uvarum (Yeast) protein is Ethanol acetyltransferase 1 (EAT1).